We begin with the raw amino-acid sequence, 88 residues long: Small ribosomal subunit protein uS15 (88 aa).

The protein belongs to the universal ribosomal protein uS15 family. In terms of assembly, part of the 30S ribosomal subunit. Forms a bridge to the 50S subunit in the 70S ribosome, contacting the 23S rRNA.

Its function is as follows. One of the primary rRNA binding proteins, it binds directly to 16S rRNA where it helps nucleate assembly of the platform of the 30S subunit by binding and bridging several RNA helices of the 16S rRNA. Forms an intersubunit bridge (bridge B4) with the 23S rRNA of the 50S subunit in the ribosome. The chain is Small ribosomal subunit protein uS15 from Acidobacterium capsulatum (strain ATCC 51196 / DSM 11244 / BCRC 80197 / JCM 7670 / NBRC 15755 / NCIMB 13165 / 161).